The primary structure comprises 801 residues: Ent-copalyl diphosphate synthase, chloroplastic (801 aa).

Lys-241 is a binding site for substrate. Positions 373 and 375 each coordinate Mg(2+). Residues 373 to 376 (DIDD) carry the DXDD motif motif. Lys-459 lines the substrate pocket.

Belongs to the terpene synthase family. Mg(2+) serves as cofactor.

The protein resides in the plastid. It is found in the chloroplast. The enzyme catalyses (2E,6E,10E)-geranylgeranyl diphosphate = ent-copalyl diphosphate. It participates in plant hormone biosynthesis; gibberellin biosynthesis. Catalyzes the conversion of geranylgeranyl diphosphate to the gibberellin precursor ent-copalyl diphosphate. The chain is Ent-copalyl diphosphate synthase, chloroplastic from Pisum sativum (Garden pea).